A 229-amino-acid chain; its full sequence is Urease accessory protein UreF (229 aa).

Belongs to the UreF family. As to quaternary structure, ureD, UreF and UreG form a complex that acts as a GTP-hydrolysis-dependent molecular chaperone, activating the urease apoprotein by helping to assemble the nickel containing metallocenter of UreC. The UreE protein probably delivers the nickel.

It localises to the cytoplasm. Its function is as follows. Required for maturation of urease via the functional incorporation of the urease nickel metallocenter. The protein is Urease accessory protein UreF of Methylobacterium radiotolerans (strain ATCC 27329 / DSM 1819 / JCM 2831 / NBRC 15690 / NCIMB 10815 / 0-1).